We begin with the raw amino-acid sequence, 429 residues long: Polypyrimidine tract-binding protein homolog 2 (429 aa).

S2 is subject to N-acetylserine. RRM domains follow at residues 18-96 (KVLH…YSNR), 110-197 (GNVL…YSAH), and 243-323 (SNVL…YSRH). The tract at residues 331 to 429 (NNDRSRDYTM…QHYGGPGPMH (99 aa)) is disordered. Residues 367–381 (GGSHHQQQQQPQGGW) are compositionally biased toward low complexity. Gly residues predominate over residues 382–397 (VQPGGQGSMGMGGGGH).

It localises to the nucleus. Functionally, plays a role in pre-mRNA splicing. Binds to the polypyrimidine tract of introns. May promote the binding of U2 snRNP to pre-mRNA. The chain is Polypyrimidine tract-binding protein homolog 2 from Arabidopsis thaliana (Mouse-ear cress).